A 323-amino-acid chain; its full sequence is Malate dehydrogenase (323 aa).

11–17 contacts NAD(+); the sequence is GAAGQIA. 2 residues coordinate substrate: Arg-92 and Arg-98. Residues Asn-105, Gln-112, and 129–131 contribute to the NAD(+) site; that span reads VGN. Residues Asn-131 and Arg-162 each contribute to the substrate site. Residue His-187 is the Proton acceptor of the active site.

The protein belongs to the LDH/MDH superfamily. MDH type 2 family.

It carries out the reaction (S)-malate + NAD(+) = oxaloacetate + NADH + H(+). In terms of biological role, catalyzes the reversible oxidation of malate to oxaloacetate. This Corynebacterium efficiens (strain DSM 44549 / YS-314 / AJ 12310 / JCM 11189 / NBRC 100395) protein is Malate dehydrogenase.